Consider the following 381-residue polypeptide: S-adenosylmethionine synthase (381 aa).

An ATP-binding site is contributed by H15. Residue D17 coordinates Mg(2+). A K(+)-binding site is contributed by E43. L-methionine-binding residues include E56 and Q99. Residues 99-109 (QSLDIAQGVDN) are flexible loop. ATP-binding positions include 164–166 (DGK), 230–231 (RF), D239, 245–246 (RK), and K266. Position 239 (D239) interacts with L-methionine. L-methionine is bound at residue K270.

The protein belongs to the AdoMet synthase family. As to quaternary structure, homotetramer; dimer of dimers. Requires Mg(2+) as cofactor. K(+) serves as cofactor.

The protein localises to the cytoplasm. The catalysed reaction is L-methionine + ATP + H2O = S-adenosyl-L-methionine + phosphate + diphosphate. It functions in the pathway amino-acid biosynthesis; S-adenosyl-L-methionine biosynthesis; S-adenosyl-L-methionine from L-methionine: step 1/1. Functionally, catalyzes the formation of S-adenosylmethionine (AdoMet) from methionine and ATP. The overall synthetic reaction is composed of two sequential steps, AdoMet formation and the subsequent tripolyphosphate hydrolysis which occurs prior to release of AdoMet from the enzyme. The sequence is that of S-adenosylmethionine synthase from Legionella jeonii.